A 401-amino-acid polypeptide reads, in one-letter code: Phosphoglycerate kinase (401 aa).

Substrate contacts are provided by residues 20-22, R35, 58-61, R117, and R154; these read DFN and HLGR. ATP is bound by residues K204, G298, E329, and 358–361; that span reads GGDS.

Belongs to the phosphoglycerate kinase family. Monomer.

The protein resides in the cytoplasm. The enzyme catalyses (2R)-3-phosphoglycerate + ATP = (2R)-3-phospho-glyceroyl phosphate + ADP. It functions in the pathway carbohydrate degradation; glycolysis; pyruvate from D-glyceraldehyde 3-phosphate: step 2/5. This is Phosphoglycerate kinase from Bifidobacterium adolescentis (strain ATCC 15703 / DSM 20083 / NCTC 11814 / E194a).